The sequence spans 499 residues: Cytochrome P450 81E8 (499 aa).

A helical membrane pass occupies residues 3–23 (TFYLSLIISLFFLIITLKVFF). Heme is bound at residue C436.

It belongs to the cytochrome P450 family. Heme is required as a cofactor.

The protein localises to the membrane. Probable monooxygenases exhibiting no activity with isoflavones such as formononetin, biochanin A, pseudobaptigenin, daidzein, genistein, isoformononetin and prunetin, or with flavonoids including naringenin, liquiritigenin, apigenin, luteolin, or kaempferol. This is Cytochrome P450 81E8 from Medicago truncatula (Barrel medic).